A 197-amino-acid chain; its full sequence is Phosphoheptose isomerase (197 aa).

The region spanning Met-36–Glu-197 is the SIS domain. Asn-51–Gly-53 contacts substrate. Positions 60 and 64 each coordinate Zn(2+). Substrate-binding positions include Glu-64, Asn-93–Asp-94, Ser-119–Ser-121, Ser-124, and Gln-174. Gln-174 and His-182 together coordinate Zn(2+).

Belongs to the SIS family. GmhA subfamily. In terms of assembly, homotetramer. Zn(2+) is required as a cofactor.

The protein localises to the cytoplasm. The catalysed reaction is 2 D-sedoheptulose 7-phosphate = D-glycero-alpha-D-manno-heptose 7-phosphate + D-glycero-beta-D-manno-heptose 7-phosphate. Its pathway is carbohydrate biosynthesis; D-glycero-D-manno-heptose 7-phosphate biosynthesis; D-glycero-alpha-D-manno-heptose 7-phosphate and D-glycero-beta-D-manno-heptose 7-phosphate from sedoheptulose 7-phosphate: step 1/1. In terms of biological role, catalyzes the isomerization of sedoheptulose 7-phosphate in D-glycero-D-manno-heptose 7-phosphate. This chain is Phosphoheptose isomerase, found in Azoarcus sp. (strain BH72).